The following is an 875-amino-acid chain: Valine--tRNA ligase (875 aa).

The 'HIGH' region motif lies at 45 to 55 (PNVTGVLHMGH). Residues 524–528 (KMSKS) carry the 'KMSKS' region motif. ATP is bound at residue lysine 527. A coiled-coil region spans residues 803-837 (VKSLIDKTKELIRLEKQLEKYKMLNISVSKKLENE).

It belongs to the class-I aminoacyl-tRNA synthetase family. ValS type 1 subfamily. Monomer.

Its subcellular location is the cytoplasm. The enzyme catalyses tRNA(Val) + L-valine + ATP = L-valyl-tRNA(Val) + AMP + diphosphate. In terms of biological role, catalyzes the attachment of valine to tRNA(Val). As ValRS can inadvertently accommodate and process structurally similar amino acids such as threonine, to avoid such errors, it has a 'posttransfer' editing activity that hydrolyzes mischarged Thr-tRNA(Val) in a tRNA-dependent manner. This chain is Valine--tRNA ligase, found in Borreliella burgdorferi (strain ATCC 35210 / DSM 4680 / CIP 102532 / B31) (Borrelia burgdorferi).